Consider the following 228-residue polypeptide: UPF0758 protein Gura_4138 (228 aa).

Residues 106-228 (RFTSPSQVFE…FLSFVDRGMM (123 aa)) form the MPN domain. Residues H177, H179, and D190 each coordinate Zn(2+). The JAMM motif motif lies at 177-190 (HNHPTGDPTPSRED).

It belongs to the UPF0758 family.

The protein is UPF0758 protein Gura_4138 of Geotalea uraniireducens (strain Rf4) (Geobacter uraniireducens).